We begin with the raw amino-acid sequence, 24 residues long: Large ribosomal subunit protein uL30 (24 aa).

This sequence belongs to the universal ribosomal protein uL30 family. In terms of assembly, part of the 50S ribosomal subunit.

This is Large ribosomal subunit protein uL30 (rpmD) from Ectopseudomonas mendocina (Pseudomonas mendocina).